An 89-amino-acid polypeptide reads, in one-letter code: MDQEQENIIVLTDEDGNELEFEELDRVEVDGKEYAILLPLDDEEDEAIILRVEYEENGEEVFSHIEDDEEWEKVADFWQELSEEDGEEE.

It belongs to the UPF0473 family.

This chain is UPF0473 protein Helmi_02360, found in Heliobacterium modesticaldum (strain ATCC 51547 / Ice1).